A 66-amino-acid chain; its full sequence is Large ribosomal subunit protein bL28 (66 aa).

Residues 1-26 form a disordered region; the sequence is MAKDAITGARTRFGNQRSHALNSSRR. Residues 13-25 are compositionally biased toward polar residues; sequence FGNQRSHALNSSR.

This sequence belongs to the bacterial ribosomal protein bL28 family.

The protein is Large ribosomal subunit protein bL28 of Leuconostoc mesenteroides subsp. mesenteroides (strain ATCC 8293 / DSM 20343 / BCRC 11652 / CCM 1803 / JCM 6124 / NCDO 523 / NBRC 100496 / NCIMB 8023 / NCTC 12954 / NRRL B-1118 / 37Y).